Consider the following 68-residue polypeptide: Large ribosomal subunit protein uL30 (68 aa).

This sequence belongs to the universal ribosomal protein uL30 family. As to quaternary structure, part of the 50S ribosomal subunit.

This chain is Large ribosomal subunit protein uL30, found in Bartonella tribocorum (strain CIP 105476 / IBS 506).